We begin with the raw amino-acid sequence, 262 residues long: Putative dimethyl sulfoxide reductase iron-sulfur subunit B (262 aa).

3 consecutive 4Fe-4S ferredoxin-type domains span residues 4–34 (YGLV…MGQF), 62–93 (LEMT…TRDD), and 94–123 (GIVE…FNWD). Positions 13, 16, 19, 23, 71, 74, 79, 83, 103, 106, 109, 113, 147, 150, 162, and 166 each coordinate [4Fe-4S] cluster. Positions 209–262 (NGEMSPGRPWKSKKLESELDDDEAAKAARRRSGSVENGYDVTPHVPAETAGGDD) are disordered.

As to quaternary structure, probable multiprotein complex that likely consists of DmsA, DmsB and DmsC. [4Fe-4S] cluster serves as cofactor.

It is found in the cell membrane. Dimethyl sulfoxide (DMSO) reductase catalyzes the reduction of dimethyl sulfoxide (DMSO) to dimethyl sulfide (DMS) during anaerobic respiration; it can also use trimethylamine N-oxide (TMAO) as terminal electron acceptor. Subunit B is proposed to be involved in electron transfer. The polypeptide is Putative dimethyl sulfoxide reductase iron-sulfur subunit B (dmsB) (Halobacterium salinarum (strain ATCC 700922 / JCM 11081 / NRC-1) (Halobacterium halobium)).